The chain runs to 127 residues: UPF0102 protein Paes_0016 (127 aa).

It belongs to the UPF0102 family.

The polypeptide is UPF0102 protein Paes_0016 (Prosthecochloris aestuarii (strain DSM 271 / SK 413)).